Reading from the N-terminus, the 100-residue chain is Large ribosomal subunit protein uL23 (100 aa).

It belongs to the universal ribosomal protein uL23 family. Part of the 50S ribosomal subunit. Contacts protein L29, and trigger factor when it is bound to the ribosome.

In terms of biological role, one of the early assembly proteins it binds 23S rRNA. One of the proteins that surrounds the polypeptide exit tunnel on the outside of the ribosome. Forms the main docking site for trigger factor binding to the ribosome. This is Large ribosomal subunit protein uL23 from Shewanella pealeana (strain ATCC 700345 / ANG-SQ1).